The chain runs to 612 residues: Glutamine--fructose-6-phosphate aminotransferase [isomerizing] (612 aa).

Cys2 acts as the Nucleophile; for GATase activity in catalysis. The region spanning 2-220 (CGIVGAIRAH…DGDIALLASD (219 aa)) is the Glutamine amidotransferase type-2 domain. 2 SIS domains span residues 288-428 (AKSV…VRGL) and 461-602 (WAQQ…VDKP). The active-site For Fru-6P isomerization activity is the Lys607.

Homodimer.

It localises to the cytoplasm. The catalysed reaction is D-fructose 6-phosphate + L-glutamine = D-glucosamine 6-phosphate + L-glutamate. In terms of biological role, catalyzes the first step in hexosamine metabolism, converting fructose-6P into glucosamine-6P using glutamine as a nitrogen source. This chain is Glutamine--fructose-6-phosphate aminotransferase [isomerizing], found in Neisseria meningitidis serogroup B (strain ATCC BAA-335 / MC58).